A 463-amino-acid polypeptide reads, in one-letter code: Protein phosphatase PP2A regulatory subunit B (463 aa).

WD repeat units follow at residues 27 to 66 (TEAD…KGCE) and 87 to 128 (EIEE…LKVV). S134 is subject to Phosphoserine. WD repeat units lie at residues 174–212 (AHAY…HSFN), 223–263 (ELTE…LCDN), 282–320 (EIIS…APVK), and 337–378 (ENDC…PGDR).

This sequence belongs to the phosphatase 2A regulatory subunit B family. As to quaternary structure, PP2A exists in several trimeric forms, all of which consist of a core composed of a catalytic subunit associated with a 65 kDa (PR65) (Subunit A) and a 55 kDa (PR55) (Subunit B) regulatory subunit.

Phosphatase 2A affects a variety of biological processes in the cell such as transcription, cell cycle progression and cellular morphogenesis, and provides an initial identification of critical substrates for this phosphatase. The regulatory subunit may direct the catalytic subunit to distinct, albeit overlapping, subsets of substrates. The polypeptide is Protein phosphatase PP2A regulatory subunit B (pab1) (Schizosaccharomyces pombe (strain 972 / ATCC 24843) (Fission yeast)).